The following is a 1094-amino-acid chain: MPHDGNERSHRIARLAAVVSGIAGLLLCGIVPLLPVNQTTATIFWPQGSTADGNITQITAPLVSGAPRALDISIPCSAIATLPANGGLVLSTLPAGGVDTGKAGLFVRANQDTVVVAFRDSVAAVAARSTIAAGGCSALHIWADTGGAGADFMGIPGGAGTLPPEKKPQVGGIFTDLKVGAQPGLSARVDIDTRFITTPGALKKAVMLLGVLAVLVAMVGLAALDRLSRGRTLRDWLTRYRPRVRVGFASRLADAAVIATLLLWHVIGATSSDDGYLLTVARVAPKAGYVANYYRYFGTTEAPFDWYTSVLAQLAAVSTAGVWMRLPATLAGIACWLIVSRFVLRRLGPGPGGLASNRVAVFTAGAVFLSAWLPFNNGLRPEPLIALGVLVTWVLVERSIALGRLAPAAVAIIVATLTATLAPQGLIALAPLLTGARAIAQRIRRRRATDGLLAPLAVLAAALSLITVVVFRDQTLATVAESARIKYKVGPTIAWYQDFLRYYFLTVESNVEGSMSRRFAVLVLLFCLFGVLFVLLRRGRVAGLASGPAWRLIGTTAVGLLLLTFTPTKWAVQFGAFAGLAGVLGAVTAFTFARIGLHSRRNLTLYVTALLFVLAWATSGINGWFYVGNYGVPWYDIQPVIASHPVTSMFLTLSILTGLLAAWYHFRMDYAGHTEVKDNRRNRILASTPLLVVAVIMVAGEVGSMAKAAVFRYPLYTTAKANLTALSTGLSSCAMADDVLAEPDPNAGMLQPVPGQAFGPDGPLGGISPVGFKPEGVGEDLKSDPVVSKPGLVNSDASPNKPNAAITDSAGTAGGKGPVGINGSHAALPFGLDPARTPVMGSYGENNLAATATSAWYQLPPRSPDRPLVVVSAAGAIWSYKEDGDFIYGQSLKLQWGVTGPDGRIQPLGQVFPIDIGPQPAWRNLRFPLAWAPPEADVARIVAYDPNLSPEQWFAFTPPRVPVLESLQRLIGSATPVLMDIATAANFPCQRPFSEHLGIAELPQYRILPDHKQTAASSNLWQSSSTGGPFLFTQALLRTSTIATYLRGDWYRDWGSVEQYHRLVPADQAPDAVVEEGVITVPGWGRPGPIRALP.

The next 13 helical transmembrane spans lie at 12-34 (IARL…VPLL), 205-224 (AVML…LAAL), 247-269 (GFAS…VIGA), 322-344 (VWMR…RFVL), 356-375 (SNRV…WLPF), 408-430 (AAVA…IALA), 451-470 (GLLA…TVVV), 519-536 (FAVL…FVLL), 543-565 (GLAS…LLTF), 575-597 (GAFA…RIGL), 604-626 (TLYV…GWFY), 641-663 (IASH…LAAW), and 684-706 (ILAS…GSMA).

This sequence belongs to the emb family.

It is found in the cell membrane. Arabinosyl transferase responsible for the polymerization of arabinose into the arabinan of arabinogalactan. This chain is Probable arabinosyltransferase A (embA), found in Mycobacterium tuberculosis (strain CDC 1551 / Oshkosh).